The primary structure comprises 278 residues: Putative ABC transporter ATP-binding protein MJ1572 (278 aa).

Positions 5 to 242 (YRLVDVSYKY…LDELNLDVPE (238 aa)) constitute an ABC transporter domain. Position 38–45 (38–45 (GPNGAGKT)) interacts with ATP.

The protein belongs to the ABC transporter superfamily.

It localises to the cell membrane. Functionally, probably part of an ABC transporter complex. Responsible for energy coupling to the transport system. The protein is Putative ABC transporter ATP-binding protein MJ1572 of Methanocaldococcus jannaschii (strain ATCC 43067 / DSM 2661 / JAL-1 / JCM 10045 / NBRC 100440) (Methanococcus jannaschii).